The primary structure comprises 291 residues: 3-hydroxy-5-phosphonooxypentane-2,4-dione thiolase (291 aa).

Catalysis depends on Lys203, which acts as the Schiff-base intermediate with substrate.

Belongs to the DeoC/FbaB aldolase family. Homodecamer.

It localises to the cytoplasm. It carries out the reaction dihydroxyacetone phosphate + acetyl-CoA = 3-hydroxy-2,4-dioxopentyl phosphate + CoA. In terms of biological role, involved in the degradation of phospho-AI-2, thereby terminating induction of the lsr operon and closing the AI-2 signaling cycle. Catalyzes the transfer of an acetyl moiety from 3-hydroxy-5-phosphonooxypentane-2,4-dione to CoA to form glycerone phosphate and acetyl-CoA. The polypeptide is 3-hydroxy-5-phosphonooxypentane-2,4-dione thiolase (Yersinia pseudotuberculosis serotype O:1b (strain IP 31758)).